The sequence spans 513 residues: Cytochrome P450 monooxygenase orf3 (513 aa).

A helical transmembrane segment spans residues 11 to 31; the sequence is LVALGLIAATIIIYSFTLTVY. N-linked (GlcNAc...) asparagine glycans are attached at residues Asn-211 and Asn-351. Cys-455 contributes to the heme binding site.

This sequence belongs to the cytochrome P450 family. Requires heme as cofactor.

Its subcellular location is the membrane. It participates in mycotoxin biosynthesis. Cytochrome P450 monooxygenase; part of the gene cluster that mediates the biosynthesis of brefeldin A (BFA), a protein transport inhibitor that shows antiviral, antifungal, and antitumor properties. The proposed biosynthesis of BFA involves formation of an acyclic polyketide chain that is differentially tailored throughout the backbone. The highly reducing polyketide synthase Bref-PKS is proposed to synthesize the precisely reduced octaketide precursor, which could then be directly offloaded by the thiohydrolase enzyme Bref-TH followed by a cytochrome P450 monooxygenase-mediated formation of the cyclopentane ring and macrocyclization to afford 7-deoxy BFA. Alternatively, the first ring annulation can also occur on the ACP-tethered intermediate before the thiohydrolase release and lactonization. The C7-hydroxylation by another cytochrome P450 monooxygenase is believed to be the final step in the process to obtain the final structure of BFA. In addition to the HRPKS Bref-PKS and the thiohydrolase Bref-TH, the brefeldin A biosynthesis cluster contains 4 cytochrome p450 monooxygenases (called orf3 to orf6), as well a the probable cluster-specific transcription regulator orf8. This is Cytochrome P450 monooxygenase orf3 from Eupenicillium brefeldianum (Penicillium brefeldianum).